A 151-amino-acid polypeptide reads, in one-letter code: MVKLNELFPKHGSRKAKRRIGLGVGSGLGRSATKGMKGQSSRSGNTKKESKEGGQMPLYRRVPKSGFSNATFAKRFDYVNIGSLEKACKAGEEVTPETMKTLGLVKCAKRVKVLANGELKKGLKVSAHGFSATAKAAIEKAGGSVTVIEKK.

Residues 1–62 are disordered; the sequence is MVKLNELFPK…GGQMPLYRRV (62 aa). The segment covering 11-20 has biased composition (basic residues); it reads HGSRKAKRRI.

This sequence belongs to the universal ribosomal protein uL15 family. As to quaternary structure, part of the 50S ribosomal subunit.

In terms of biological role, binds to the 23S rRNA. This is Large ribosomal subunit protein uL15 from Elusimicrobium minutum (strain Pei191).